Consider the following 138-residue polypeptide: MEAWESSQPLLRCEIPCPLPGTDRDGSVSLPGEAASCDLDTLEPEHGNRRVSGNPISVCWAYKVTKVKCWSVRERGGRHIGGPRSTLKHPAHHGMGKNLATSLPTAASLGLGKGQLLVSIRFMDTTKKRGQSETFNIC.

This is an uncharacterized protein from Homo sapiens (Human).